A 533-amino-acid chain; its full sequence is Tryptophan N-monooxygenase CYP79A68 (533 aa).

A helical transmembrane segment spans residues 12-32 (VTPPISLSLAFIIFMFLVKFI). Asn-209 is a glycosylation site (N-linked (GlcNAc...) asparagine). Cys-471 serves as a coordination point for heme.

Belongs to the cytochrome P450 family. It depends on heme as a cofactor. As to expression, confined to buds.

The protein resides in the membrane. It carries out the reaction L-tryptophan + 2 reduced [NADPH--hemoprotein reductase] + 2 O2 = (E)-(indol-3-yl)acetaldehyde oxime + 2 oxidized [NADPH--hemoprotein reductase] + CO2 + 3 H2O + 2 H(+). Its function is as follows. Catalyzes with low efficiency E and Z isomers of indole-3-acetaldoxime from tryptophan (Trp). The polypeptide is Tryptophan N-monooxygenase CYP79A68 (Prunus mume (Japanese apricot)).